The chain runs to 452 residues: Phosphoglucosamine mutase (452 aa).

Residue serine 101 is the Phosphoserine intermediate of the active site. Serine 101, aspartate 241, aspartate 243, and aspartate 245 together coordinate Mg(2+). Position 101 is a phosphoserine (serine 101).

This sequence belongs to the phosphohexose mutase family. Requires Mg(2+) as cofactor. Activated by phosphorylation.

It carries out the reaction alpha-D-glucosamine 1-phosphate = D-glucosamine 6-phosphate. Catalyzes the conversion of glucosamine-6-phosphate to glucosamine-1-phosphate. This chain is Phosphoglucosamine mutase, found in Lactococcus lactis subsp. lactis (strain IL1403) (Streptococcus lactis).